A 360-amino-acid polypeptide reads, in one-letter code: Phosphoserine aminotransferase (360 aa).

Residue R42 participates in L-glutamate binding. Residues W102, T152, D171, and Q194 each contribute to the pyridoxal 5'-phosphate site. K195 carries the post-translational modification N6-(pyridoxal phosphate)lysine. 237 to 238 is a pyridoxal 5'-phosphate binding site; it reads NT.

Belongs to the class-V pyridoxal-phosphate-dependent aminotransferase family. SerC subfamily. In terms of assembly, homodimer. Requires pyridoxal 5'-phosphate as cofactor.

It localises to the cytoplasm. It catalyses the reaction O-phospho-L-serine + 2-oxoglutarate = 3-phosphooxypyruvate + L-glutamate. The catalysed reaction is 4-(phosphooxy)-L-threonine + 2-oxoglutarate = (R)-3-hydroxy-2-oxo-4-phosphooxybutanoate + L-glutamate. It functions in the pathway amino-acid biosynthesis; L-serine biosynthesis; L-serine from 3-phospho-D-glycerate: step 2/3. Its pathway is cofactor biosynthesis; pyridoxine 5'-phosphate biosynthesis; pyridoxine 5'-phosphate from D-erythrose 4-phosphate: step 3/5. Catalyzes the reversible conversion of 3-phosphohydroxypyruvate to phosphoserine and of 3-hydroxy-2-oxo-4-phosphonooxybutanoate to phosphohydroxythreonine. The polypeptide is Phosphoserine aminotransferase (Coxiella burnetii (strain RSA 331 / Henzerling II)).